Reading from the N-terminus, the 87-residue chain is MANHKSAIKRHKQSVKRAARNRAVKTRIKNAIKAVRTAVTEKDKEQAQAKLTDAMSVLDKASSKGVIHWKNAARKISRLSKAVDGIE.

A disordered region spans residues 1 to 23 (MANHKSAIKRHKQSVKRAARNRA).

It belongs to the bacterial ribosomal protein bS20 family.

Its function is as follows. Binds directly to 16S ribosomal RNA. The sequence is that of Small ribosomal subunit protein bS20 from Oleidesulfovibrio alaskensis (strain ATCC BAA-1058 / DSM 17464 / G20) (Desulfovibrio alaskensis).